The chain runs to 1261 residues: Structural maintenance of chromosomes protein 3 (1261 aa).

Coiled coils occupy residues 188–332 (EKIQ…HSLQ) and 406–450 (LIAD…YEMD). An SMC hinge domain is found at 534–645 (NGYYGTVIEL…IIVRTLDQAA (112 aa)). Coiled coils occupy residues 677–826 (KRSK…MDLM), 857–930 (NERR…DKIT), and 1023–1085 (RELE…ENRK). The DA-box motif lies at 1159–1193 (LSGGQKSLVALAIIFSIQKCDPAPFYLFDEIDAAL).

The protein belongs to the SMC family. SMC3 subfamily. In terms of assembly, component of the cohesin complex, composed of the smc-1 and smc-3 heterodimer attached via their SMC hinge domain, scc-1 which links them, and scc-3. Interacts with scc-1, smc-1 and tim-1.

The protein resides in the nucleus. It is found in the chromosome. Its function is as follows. Involved in chromosome cohesion during cell cycle and in DNA repair. Involved in the repair of double strand breaks during mitosis and meiosis. Required for chromosome segregation during mitosis. Central component of cohesin complex. The cohesin complex is required for the cohesion of sister chromatids after DNA replication. The cohesin complex apparently forms a large proteinaceous ring within which sister chromatids can be trapped. At anaphase, the complex is cleaved and dissociates from chromatin, allowing sister chromatids to segregate. Required for the localization of lab-1 to meiotic and mitotic chromosomes. The chain is Structural maintenance of chromosomes protein 3 from Caenorhabditis elegans.